We begin with the raw amino-acid sequence, 253 residues long: Triosephosphate isomerase (253 aa).

13–15 (NWK) is a substrate binding site. The active-site Electrophile is the H100. Residue E169 is the Proton acceptor of the active site. Substrate contacts are provided by residues G175, S208, and 229 to 230 (GG).

This sequence belongs to the triosephosphate isomerase family. In terms of assembly, homodimer.

The protein resides in the cytoplasm. It carries out the reaction D-glyceraldehyde 3-phosphate = dihydroxyacetone phosphate. The protein operates within carbohydrate biosynthesis; gluconeogenesis. It functions in the pathway carbohydrate degradation; glycolysis; D-glyceraldehyde 3-phosphate from glycerone phosphate: step 1/1. Its function is as follows. Involved in the gluconeogenesis. Catalyzes stereospecifically the conversion of dihydroxyacetone phosphate (DHAP) to D-glyceraldehyde-3-phosphate (G3P). The polypeptide is Triosephosphate isomerase (Synechococcus sp. (strain RCC307)).